The chain runs to 176 residues: Large ribosomal subunit protein bL19 (176 aa).

It belongs to the bacterial ribosomal protein bL19 family.

This protein is located at the 30S-50S ribosomal subunit interface and may play a role in the structure and function of the aminoacyl-tRNA binding site. The chain is Large ribosomal subunit protein bL19 from Sinorhizobium fredii (strain NBRC 101917 / NGR234).